A 572-amino-acid polypeptide reads, in one-letter code: Urocanate hydratase (572 aa).

NAD(+) contacts are provided by residues 48 to 49, Gln-126, 172 to 174, Asp-192, 238 to 239, 259 to 263, 268 to 269, and Tyr-317; these read GG, GMG, NA, QTSAH, and YL. Cys-405 is a catalytic residue. Gly-487 is an NAD(+) binding site. The span at 550–559 shows a compositional bias: basic and acidic residues; it reads EGDEAHEGDA. The tract at residues 550-572 is disordered; the sequence is EGDEAHEGDAAHGSGAAREGDGV.

This sequence belongs to the urocanase family. It depends on NAD(+) as a cofactor.

It is found in the cytoplasm. The enzyme catalyses 4-imidazolone-5-propanoate = trans-urocanate + H2O. It functions in the pathway amino-acid degradation; L-histidine degradation into L-glutamate; N-formimidoyl-L-glutamate from L-histidine: step 2/3. Functionally, catalyzes the conversion of urocanate to 4-imidazolone-5-propionate. The polypeptide is Urocanate hydratase (Streptomyces coelicolor (strain ATCC BAA-471 / A3(2) / M145)).